A 178-amino-acid chain; its full sequence is ATP synthase subunit delta (178 aa).

Belongs to the ATPase delta chain family. As to quaternary structure, F-type ATPases have 2 components, F(1) - the catalytic core - and F(0) - the membrane proton channel. F(1) has five subunits: alpha(3), beta(3), gamma(1), delta(1), epsilon(1). F(0) has three main subunits: a(1), b(2) and c(10-14). The alpha and beta chains form an alternating ring which encloses part of the gamma chain. F(1) is attached to F(0) by a central stalk formed by the gamma and epsilon chains, while a peripheral stalk is formed by the delta and b chains.

It localises to the cell inner membrane. In terms of biological role, f(1)F(0) ATP synthase produces ATP from ADP in the presence of a proton or sodium gradient. F-type ATPases consist of two structural domains, F(1) containing the extramembraneous catalytic core and F(0) containing the membrane proton channel, linked together by a central stalk and a peripheral stalk. During catalysis, ATP synthesis in the catalytic domain of F(1) is coupled via a rotary mechanism of the central stalk subunits to proton translocation. This protein is part of the stalk that links CF(0) to CF(1). It either transmits conformational changes from CF(0) to CF(1) or is implicated in proton conduction. In Teredinibacter turnerae (strain ATCC 39867 / T7901), this protein is ATP synthase subunit delta.